The sequence spans 419 residues: CinA-like protein (419 aa).

This sequence belongs to the CinA family.

The sequence is that of CinA-like protein from Picosynechococcus sp. (strain ATCC 27264 / PCC 7002 / PR-6) (Agmenellum quadruplicatum).